The chain runs to 273 residues: MVGFGLGTLRYVPEESKDKVTSDEDVLGTLLKVFQALFLNDFNKQSEILTMLPESVKSKYQDLLAVEHQGVKLLENRHQQQSTFKPEEILYKTLGFSVAQATSSLISAGKGVFVTKGLVPKGAVVSMYPGTVYQKYEPIFFQSIGNPFIFRCLDGVLIDGNDKGISKVVYRSCNGRDRLGPLKMSDSTWLTSEIHNPLAVGQYVNNCSNDRAANVCYQEFDVPAVFPIELKQYLPNIAYSYDKHSPLRCVVLVALRDINQGEELFSNYYTIVS.

An SET domain is found at 96–269 (FSVAQATSSL…QGEELFSNYY (174 aa)). Residue tyrosine 268 coordinates S-adenosyl-L-methionine.

Belongs to the class V-like SAM-binding methyltransferase superfamily.

This Pongo abelii (Sumatran orangutan) protein is SET domain-containing protein 9 (SETD9).